A 140-amino-acid chain; its full sequence is Immunity protein RhsIC (140 aa).

Putative immunity protein component of a toxin-immunity protein module, which may function as a cellular contact-dependent growth inhibition (CDI) system. Blocks the toxic effects of expression of the C-terminus (residues 1519-1658) of cognate toxin RhsC in E.coli. The chain is Immunity protein RhsIC (rhsIC) from Dickeya dadantii (strain 3937) (Erwinia chrysanthemi (strain 3937)).